The chain runs to 450 residues: Glucose-6-phosphate isomerase (450 aa).

Catalysis depends on Glu-290, which acts as the Proton donor. Residues His-311 and Lys-425 contribute to the active site.

It belongs to the GPI family.

It localises to the cytoplasm. It catalyses the reaction alpha-D-glucose 6-phosphate = beta-D-fructose 6-phosphate. The protein operates within carbohydrate biosynthesis; gluconeogenesis. Its pathway is carbohydrate degradation; glycolysis; D-glyceraldehyde 3-phosphate and glycerone phosphate from D-glucose: step 2/4. In terms of biological role, catalyzes the reversible isomerization of glucose-6-phosphate to fructose-6-phosphate. In Leuconostoc mesenteroides subsp. mesenteroides (strain ATCC 8293 / DSM 20343 / BCRC 11652 / CCM 1803 / JCM 6124 / NCDO 523 / NBRC 100496 / NCIMB 8023 / NCTC 12954 / NRRL B-1118 / 37Y), this protein is Glucose-6-phosphate isomerase.